The sequence spans 257 residues: uncharacterized protein (257 aa).

Disordered stretches follow at residues 1–178 (MAMF…SYDS) and 194–248 (AITK…LAGN). Residues 12 to 21 (SKLKKGRRKL) show a composition bias toward basic residues. Over residues 50 to 71 (NTNSGSSSDGEDGLLTSSGSDS) the composition is skewed to low complexity. The segment covering 72 to 94 (VFNSTDYFSTPEDSQNCTPSDVS) has biased composition (polar residues). Over residues 102-114 (LDFKPADVLHDSE) the composition is skewed to basic and acidic residues. Over residues 115 to 126 (NSTSPKFITSLV) the composition is skewed to polar residues. Residues 127–136 (SSDSENSGAD) are compositionally biased toward low complexity. The span at 163 to 178 (ITSEEDCCVQEDSYDS) shows a compositional bias: acidic residues.

This sequence belongs to the herpesviridae BKRF4 family.

This is an uncharacterized protein from Saimiriine herpesvirus 2 (strain 11) (SaHV-2).